Consider the following 459-residue polypeptide: O-phospho-L-seryl-tRNA:Cys-tRNA synthase 1 (459 aa).

Pyridoxal 5'-phosphate is bound by residues 152–153 (AR), Asn-257, and 280–282 (SGH). The residue at position 283 (Lys-283) is an N6-(pyridoxal phosphate)lysine.

Belongs to the SepCysS family. Homodimer. Interacts with SepRS. Requires pyridoxal 5'-phosphate as cofactor.

The enzyme catalyses O-phospho-L-seryl-tRNA(Cys) + hydrogen sulfide + H(+) = L-cysteinyl-tRNA(Cys) + phosphate. In terms of biological role, converts O-phospho-L-seryl-tRNA(Cys) (Sep-tRNA(Cys)) to L-cysteinyl-tRNA(Cys) (Cys-tRNA(Cys)). The polypeptide is O-phospho-L-seryl-tRNA:Cys-tRNA synthase 1 (Methanococcoides burtonii (strain DSM 6242 / NBRC 107633 / OCM 468 / ACE-M)).